The chain runs to 359 residues: 4-galactosyl-N-acetylglucosaminide 3-alpha-L-fucosyltransferase 9 (359 aa).

The Cytoplasmic portion of the chain corresponds to 1-11 (MTSTSKGILRP). A helical; Signal-anchor for type II membrane protein transmembrane segment spans residues 12 to 32 (FLIVCVILACFMACLLIYIKP). The Lumenal portion of the chain corresponds to 33-359 (TNSWVFSPME…VGNLEKWFWN (327 aa)). N-linked (GlcNAc...) asparagine glycosylation is present at asparagine 62. The tract at residues 63–168 (ETTILVWVWP…RRDSDIQVPY (106 aa)) is acceptor-binding. An a beta-D-galactosyl-(1-&gt;4)-N-acetyl-beta-D-glucosaminyl derivative-binding site is contributed by glutamine 75. Intrachain disulfides connect cysteine 82–cysteine 335, cysteine 91–cysteine 338, and cysteine 190–cysteine 238. N-linked (GlcNAc...) asparagine glycosylation occurs at asparagine 101. Glutamate 137 contributes to the a beta-D-galactosyl-(1-&gt;4)-N-acetyl-beta-D-glucosaminyl derivative binding site. Glutamate 137 serves as the catalytic Nucleophile. Glutamate 137 is a binding site for GDP-beta-L-fucose. Residue asparagine 153 is glycosylated (N-linked (GlcNAc...) asparagine). Tyrosine 168, valine 192, serine 194, asparagine 195, arginine 202, valine 226, tyrosine 241, asparagine 246, tyrosine 252, glutamate 255, and lysine 256 together coordinate GDP-beta-L-fucose. The interval 169 to 326 (GFLTVSTNPF…NWRKDFTVNL (158 aa)) is donor-binding. The segment at 327–359 (PRFWESHACLACDHVKRHQEYKSVGNLEKWFWN) is acceptor-binding.

Belongs to the glycosyltransferase 10 family. In terms of assembly, homodimer. Post-translationally, N-glycosylated with complex-type N-glycans.

The protein resides in the golgi apparatus. The protein localises to the trans-Golgi network membrane. It localises to the golgi apparatus membrane. The enzyme catalyses a beta-D-galactosyl-(1-&gt;4)-N-acetyl-beta-D-glucosaminyl derivative + GDP-beta-L-fucose = a beta-D-galactosyl-(1-&gt;4)-[alpha-L-fucosyl-(1-&gt;3)]-N-acetyl-beta-D-glucosaminyl derivative + GDP + H(+). The catalysed reaction is an alpha-Neu5Ac-(2-&gt;3)-beta-D-Gal-(1-&gt;4)-beta-D-GlcNAc-(1-&gt;3)-beta-D-Gal-(1-&gt;4)-beta-D-GlcNAc derivative + GDP-beta-L-fucose = an alpha-Neu5Ac-(2-&gt;3)-beta-D-Gal-(1-&gt;4)-beta-D-GlcNAc-(1-&gt;3)-beta-D-Gal-(1-&gt;4)-[alpha-L-Fuc-(1-&gt;3)]-beta-D-GlcNAc derivative + GDP + H(+). It carries out the reaction alpha-N-glycoloylneuraminosyl-(2-&gt;3)-beta-D-galactosyl-(1-&gt;4)-N-acetyl-beta-D-glucosaminyl-(1-&gt;3)-beta-D-galactosyl-(1-&gt;4)-N-acetyl-beta-D-glucosaminyl-(1-&gt;3)-beta-D-galactosyl-(1-&gt;4)-beta-D-glucosyl-(1&lt;-&gt;1')-ceramide + GDP-beta-L-fucose = alpha-N-glycoloylneuraminosyl-(2-&gt;3)-beta-D-galactosyl-(1-&gt;4)-N-acetyl-beta-D-glucosaminyl-(1-&gt;3)-beta-D-galactosyl-(1-&gt;4)-[alpha-L-fucosyl-(1-&gt;3)]-N-acetyl-beta-D-glucosaminyl-(1-&gt;3)-beta-D-galactosyl-(1-&gt;4)-beta-D-glucosyl-(1&lt;-&gt;1')-ceramide + GDP + H(+). It catalyses the reaction alpha-D-galactosyl-(1-&gt;3)-beta-D-galactosyl-(1-&gt;4)-N-acetyl-beta-D-glucosaminyl-(1-&gt;3)-beta-D-galactosyl-(1-&gt;4)-beta-D-glucosyl-(1&lt;-&gt;1')-ceramide + GDP-beta-L-fucose = a neolactoside IV(3)-alpha-Gal,III(3)-alpha-Fuc-nLc4Cer + GDP + H(+). The enzyme catalyses a neolactoside nLc4Cer + GDP-beta-L-fucose = a neolactoside III(3)-alpha-Fuc-nLc4Cer + GDP + H(+). The catalysed reaction is an N-acetyl-alpha-neuraminyl-(2-&gt;3)-beta-D-galactosyl-(1-&gt;4)-N-acetyl-beta-D-glucosaminyl derivative + GDP-beta-L-fucose = an alpha-Neu5Ac-(2-&gt;3)-beta-D-Gal-(1-&gt;4)-[alpha-L-Fuc-(1-&gt;3)]-beta-D-GlcNAc derivative + GDP + H(+). It carries out the reaction beta-D-Gal-(1-&gt;4)-beta-D-GlcNAc-(1-&gt;3)-beta-D-Gal-(1-&gt;4)-D-Glc + GDP-beta-L-fucose = beta-D-Gal-(1-&gt;4)-[alpha-L-Fuc-(1-&gt;3)]-beta-D-GlcNAc-(1-&gt;3)-beta-D-Gal-(1-&gt;4)-D-Glc + GDP + H(+). It catalyses the reaction an alpha-L-Fuc-(1-&gt;2)-beta-D-Gal-(1-&gt;4)-beta-D-GlcNAc derivative + GDP-beta-L-fucose = an alpha-L-Fuc-(1-&gt;2)-beta-D-Gal-(1-&gt;4)-[alpha-L-Fuc-(1-&gt;3)]-beta-D-GlcNAc derivative + GDP + H(+). Its pathway is protein modification; protein glycosylation. It participates in glycolipid biosynthesis. With respect to regulation, activated by Mn2+. Catalyzes alpha(1-&gt;3) linkage of fucosyl moiety transferred from GDP-beta-L-fucose to N-acetyl glucosamine (GlcNAc) within type 2 lactosamine (LacNAc, beta-D-Gal-(1-&gt;4)-beta-D-GlcNAc-) glycan attached to glycolipids and N- or O-linked glycoproteins. Fucosylates distal type 2 LacNAc and its fucosylated (H-type 2 LacNAc) and sialylated (sialyl-type 2 LacNAc) derivatives to form Lewis x (Lex) (CD15) and Lewis y (Ley) antigenic epitopes involved in cell adhesion and differentiation. Generates Lex epitopes in the brain, presumably playing a role in the maintenance of neuronal stemness and neurite outgrowth in progenitor neural cells. Fucosylates the internal type 2 LacNAc unit of the polylactosamine chain to form VIM-2 antigen that serves as recognition epitope for SELE. Can also modify milk oligosaccharides in particular type 2 tetrasaccharide LNnT. The sequence is that of 4-galactosyl-N-acetylglucosaminide 3-alpha-L-fucosyltransferase 9 from Cricetulus griseus (Chinese hamster).